A 313-amino-acid polypeptide reads, in one-letter code: 2,3-dihydroxyphenylpropionate/2,3-dihydroxicinnamic acid 1,2-dioxygenase (313 aa).

His-115 acts as the Proton donor in catalysis. His-179 functions as the Proton acceptor in the catalytic mechanism.

This sequence belongs to the LigB/MhpB extradiol dioxygenase family. As to quaternary structure, homotetramer. Fe(2+) is required as a cofactor.

The catalysed reaction is 3-(2,3-dihydroxyphenyl)propanoate + O2 = (2Z,4E)-2-hydroxy-6-oxonona-2,4-dienedioate + H(+). It carries out the reaction (2E)-3-(2,3-dihydroxyphenyl)prop-2-enoate + O2 = (2Z,4E,7E)-2-hydroxy-6-oxonona-2,4,7-trienedioate + H(+). Its pathway is aromatic compound metabolism; 3-phenylpropanoate degradation. Functionally, catalyzes the non-heme iron(II)-dependent oxidative cleavage of 2,3-dihydroxyphenylpropionic acid and 2,3-dihydroxicinnamic acid into 2-hydroxy-6-ketononadienedioate and 2-hydroxy-6-ketononatrienedioate, respectively. This Mycolicibacterium smegmatis (strain ATCC 700084 / mc(2)155) (Mycobacterium smegmatis) protein is 2,3-dihydroxyphenylpropionate/2,3-dihydroxicinnamic acid 1,2-dioxygenase.